Consider the following 205-residue polypeptide: Potassium-transporting ATPase KdpC subunit (205 aa).

A helical transmembrane segment spans residues 7–27; that stretch reads PAIVILVALTIITGLIYPLAM.

This sequence belongs to the KdpC family. As to quaternary structure, the system is composed of three essential subunits: KdpA, KdpB and KdpC.

The protein resides in the cell inner membrane. Functionally, part of the high-affinity ATP-driven potassium transport (or Kdp) system, which catalyzes the hydrolysis of ATP coupled with the electrogenic transport of potassium into the cytoplasm. This subunit acts as a catalytic chaperone that increases the ATP-binding affinity of the ATP-hydrolyzing subunit KdpB by the formation of a transient KdpB/KdpC/ATP ternary complex. This is Potassium-transporting ATPase KdpC subunit from Nitrobacter hamburgensis (strain DSM 10229 / NCIMB 13809 / X14).